The primary structure comprises 283 residues: Elongation factor Ts (283 aa).

An involved in Mg(2+) ion dislocation from EF-Tu region spans residues 80-83; sequence TDFV.

Belongs to the EF-Ts family.

It is found in the cytoplasm. Its function is as follows. Associates with the EF-Tu.GDP complex and induces the exchange of GDP to GTP. It remains bound to the aminoacyl-tRNA.EF-Tu.GTP complex up to the GTP hydrolysis stage on the ribosome. The chain is Elongation factor Ts from Klebsiella pneumoniae (strain 342).